Reading from the N-terminus, the 397-residue chain is ATP-dependent RNA helicase eIF4A (397 aa).

Residues 23-51 (YKFDDLNLKPNIVRGIFGYGYETPSAIQQ) carry the Q motif motif. In terms of domain architecture, Helicase ATP-binding spans 54–224 (ILPITEGRDV…TKFMNNPVRI (171 aa)). 67–74 (AQSGTGKT) lines the ATP pocket. A DEAD box motif is present at residues 172 to 175 (DEAD). Residues 235–396 (GIKQFYINVE…EMPADIGALF (162 aa)) form the Helicase C-terminal domain.

It belongs to the DEAD box helicase family. eIF4A subfamily. As to quaternary structure, component of the eIF4F complex, which composition varies with external and internal environmental conditions. It is composed of at least eIF4A, eIF4E and eIF4G.

The protein resides in the cytoplasm. The catalysed reaction is ATP + H2O = ADP + phosphate + H(+). Functionally, ATP-dependent RNA helicase which is a subunit of the eIF4F complex involved in cap recognition and is required for mRNA binding to ribosome. In the current model of translation initiation, eIF4A unwinds RNA secondary structures in the 5'-UTR of mRNAs which is necessary to allow efficient binding of the small ribosomal subunit, and subsequent scanning for the initiator codon. The sequence is that of ATP-dependent RNA helicase eIF4A (TIF1) from Scheffersomyces stipitis (strain ATCC 58785 / CBS 6054 / NBRC 10063 / NRRL Y-11545) (Yeast).